Reading from the N-terminus, the 67-residue chain is DNA-directed RNA polymerase subunit omega (67 aa).

Belongs to the RNA polymerase subunit omega family. The RNAP catalytic core consists of 2 alpha, 1 beta, 1 beta' and 1 omega subunit. When a sigma factor is associated with the core the holoenzyme is formed, which can initiate transcription.

It catalyses the reaction RNA(n) + a ribonucleoside 5'-triphosphate = RNA(n+1) + diphosphate. Its function is as follows. Promotes RNA polymerase assembly. Latches the N- and C-terminal regions of the beta' subunit thereby facilitating its interaction with the beta and alpha subunits. This Bordetella petrii (strain ATCC BAA-461 / DSM 12804 / CCUG 43448) protein is DNA-directed RNA polymerase subunit omega.